A 144-amino-acid chain; its full sequence is Small ribosomal subunit protein bS6 (144 aa).

The disordered stretch occupies residues 97–144; that stretch reads DTEQSLIMKSKDEKGDKPERSERRRRDDEEVDAAPAATDTDGDNAEAA. A compositionally biased stretch (basic and acidic residues) spans 105–124; it reads KSKDEKGDKPERSERRRRDD.

It belongs to the bacterial ribosomal protein bS6 family.

Binds together with bS18 to 16S ribosomal RNA. In Xanthomonas campestris pv. campestris (strain B100), this protein is Small ribosomal subunit protein bS6.